We begin with the raw amino-acid sequence, 186 residues long: ATP synthase subunit b (186 aa).

Residues 25–45 (IVWSVVCVAIIAVVFYKYVIP) traverse the membrane as a helical segment.

Belongs to the ATPase B chain family. F-type ATPases have 2 components, F(1) - the catalytic core - and F(0) - the membrane proton channel. F(1) has five subunits: alpha(3), beta(3), gamma(1), delta(1), epsilon(1). F(0) has three main subunits: a(1), b(2) and c(10-14). The alpha and beta chains form an alternating ring which encloses part of the gamma chain. F(1) is attached to F(0) by a central stalk formed by the gamma and epsilon chains, while a peripheral stalk is formed by the delta and b chains.

Its subcellular location is the cell membrane. In terms of biological role, f(1)F(0) ATP synthase produces ATP from ADP in the presence of a proton or sodium gradient. F-type ATPases consist of two structural domains, F(1) containing the extramembraneous catalytic core and F(0) containing the membrane proton channel, linked together by a central stalk and a peripheral stalk. During catalysis, ATP synthesis in the catalytic domain of F(1) is coupled via a rotary mechanism of the central stalk subunits to proton translocation. Its function is as follows. Component of the F(0) channel, it forms part of the peripheral stalk, linking F(1) to F(0). This Nocardia farcinica (strain IFM 10152) protein is ATP synthase subunit b.